Consider the following 110-residue polypeptide: Large ribosomal subunit protein uL22 (110 aa).

The protein belongs to the universal ribosomal protein uL22 family. As to quaternary structure, part of the 50S ribosomal subunit.

In terms of biological role, this protein binds specifically to 23S rRNA; its binding is stimulated by other ribosomal proteins, e.g. L4, L17, and L20. It is important during the early stages of 50S assembly. It makes multiple contacts with different domains of the 23S rRNA in the assembled 50S subunit and ribosome. The globular domain of the protein is located near the polypeptide exit tunnel on the outside of the subunit, while an extended beta-hairpin is found that lines the wall of the exit tunnel in the center of the 70S ribosome. This is Large ribosomal subunit protein uL22 from Stutzerimonas stutzeri (strain A1501) (Pseudomonas stutzeri).